A 512-amino-acid chain; its full sequence is 2,3-bisphosphoglycerate-independent phosphoglycerate mutase (512 aa).

Positions 18 and 68 each coordinate Mn(2+). The active-site Phosphoserine intermediate is Ser-68. Substrate contacts are provided by residues His-129, 159 to 160, Arg-191, Arg-197, 265 to 268, and Lys-338; these read RD and RPDR. The Mn(2+) site is built by Asp-403, His-407, Asp-444, His-445, and His-462.

Belongs to the BPG-independent phosphoglycerate mutase family. In terms of assembly, monomer. Mn(2+) is required as a cofactor.

The catalysed reaction is (2R)-2-phosphoglycerate = (2R)-3-phosphoglycerate. It participates in carbohydrate degradation; glycolysis; pyruvate from D-glyceraldehyde 3-phosphate: step 3/5. Functionally, catalyzes the interconversion of 2-phosphoglycerate and 3-phosphoglycerate. The protein is 2,3-bisphosphoglycerate-independent phosphoglycerate mutase of Mesomycoplasma hyopneumoniae (strain 232) (Mycoplasma hyopneumoniae).